We begin with the raw amino-acid sequence, 440 residues long: Xaa-Pro dipeptidase (440 aa).

5 residues coordinate Mn(2+): aspartate 244, aspartate 255, histidine 336, glutamate 381, and glutamate 420.

It belongs to the peptidase M24B family. Bacterial-type prolidase subfamily. It depends on Mn(2+) as a cofactor.

It catalyses the reaction Xaa-L-Pro dipeptide + H2O = an L-alpha-amino acid + L-proline. In terms of biological role, splits dipeptides with a prolyl residue in the C-terminal position. The protein is Xaa-Pro dipeptidase of Pseudoalteromonas translucida (strain TAC 125).